Here is a 517-residue protein sequence, read N- to C-terminus: Crotonobetaine/carnitine--CoA ligase (517 aa).

Belongs to the ATP-dependent AMP-binding enzyme family.

It carries out the reaction 4-(trimethylamino)butanoate + ATP + CoA = 4-(trimethylamino)butanoyl-CoA + AMP + diphosphate. The catalysed reaction is crotonobetaine + ATP + CoA = crotonobetainyl-CoA + AMP + diphosphate. It catalyses the reaction (R)-carnitine + ATP + CoA = (R)-carnitinyl-CoA + AMP + diphosphate. Its pathway is amine and polyamine metabolism; carnitine metabolism. Its function is as follows. Catalyzes the transfer of CoA to carnitine, generating the initial carnitinyl-CoA needed for the CaiB reaction cycle. Also has activity toward crotonobetaine and gamma-butyrobetaine. This is Crotonobetaine/carnitine--CoA ligase from Escherichia coli O157:H7.